Here is an 87-residue protein sequence, read N- to C-terminus: Exodeoxyribonuclease 7 small subunit (87 aa).

It belongs to the XseB family. Heterooligomer composed of large and small subunits.

The protein localises to the cytoplasm. It catalyses the reaction Exonucleolytic cleavage in either 5'- to 3'- or 3'- to 5'-direction to yield nucleoside 5'-phosphates.. Bidirectionally degrades single-stranded DNA into large acid-insoluble oligonucleotides, which are then degraded further into small acid-soluble oligonucleotides. The polypeptide is Exodeoxyribonuclease 7 small subunit (Solidesulfovibrio magneticus (strain ATCC 700980 / DSM 13731 / RS-1) (Desulfovibrio magneticus)).